A 130-amino-acid polypeptide reads, in one-letter code: Small ribosomal subunit protein uS9 (130 aa).

The protein belongs to the universal ribosomal protein uS9 family.

This is Small ribosomal subunit protein uS9 from Oceanobacillus iheyensis (strain DSM 14371 / CIP 107618 / JCM 11309 / KCTC 3954 / HTE831).